The chain runs to 343 residues: ELAV-like protein 3 (343 aa).

RRM domains follow at residues 35-113 (TNLI…YARP), 121-202 (ANLY…FANN), and 260-338 (WCIF…FKTS).

Belongs to the RRM elav family.

RNA-binding protein that binds to AU-rich sequences (AREs) of target mRNAs. May also bind poly-A tracts via RRM 3. May be involved in neuronal differentiation and maintenance. The polypeptide is ELAV-like protein 3 (Xenopus tropicalis (Western clawed frog)).